Here is a 421-residue protein sequence, read N- to C-terminus: ATP-dependent RNA helicase RhlB (421 aa).

The short motif at 9–37 (QKFSDFALHPQVVEALEKKGFYNCTPIQA) is the Q motif element. Positions 40 to 219 (LPLTLAGRDV…FEQMNNAEYV (180 aa)) constitute a Helicase ATP-binding domain. ATP is bound at residue 53-60 (AQTGTGKT). A DEAD box motif is present at residues 165–168 (DEAD). The 146-residue stretch at 245–390 (RLLQTLIEEE…VSKYNPEALM (146 aa)) folds into the Helicase C-terminal domain. Positions 396–421 (PLRLTRSRPGNGPRRAGAPRNRRRSG) are disordered. Positions 402–414 (SRPGNGPRRAGAP) are enriched in low complexity.

Belongs to the DEAD box helicase family. RhlB subfamily. Component of the RNA degradosome, which is a multiprotein complex involved in RNA processing and mRNA degradation.

It is found in the cytoplasm. It carries out the reaction ATP + H2O = ADP + phosphate + H(+). Functionally, DEAD-box RNA helicase involved in RNA degradation. Has RNA-dependent ATPase activity and unwinds double-stranded RNA. The sequence is that of ATP-dependent RNA helicase RhlB from Salmonella paratyphi A (strain AKU_12601).